Here is a 642-residue protein sequence, read N- to C-terminus: Frizzled and smoothened-like protein B (642 aa).

Residues 1–26 form the signal peptide; it reads MFNKNNNNNKIIIILKLFLIILIVNN. Topologically, residues 27-264 are extracellular; it reads NNNIKTFGLN…KWHQMYNMSK (238 aa). Residues 47–197 enclose the FZ domain; it reads DPTATCSNYI…GFFPVPCSDP (151 aa). Cystine bridges form between Cys-52–Cys-123, Cys-65–Cys-116, and Cys-143–Cys-194. N-linked (GlcNAc...) asparagine glycosylation is found at Asn-80, Asn-153, Asn-162, Asn-177, Asn-203, Asn-222, and Asn-261. Residues 265-285 traverse the membrane as a helical segment; the sequence is ILSTISFVCSIYNVLTFGILN. Residues 286-294 are Cytoplasmic-facing; sequence HRRSKYNYC. A helical transmembrane segment spans residues 295-315; that stretch reads ITFFSASVIIITMMDIVTYGI. At 316 to 344 the chain is on the extracellular side; the sequence is GYEKLLCPEPGRFAVQSDVSCGATGALFH. A helical membrane pass occupies residues 345 to 365; that stretch reads IGITNGVFWWTTMSICLFAVV. Topologically, residues 366 to 375 are cytoplasmic; the sequence is KRIKLFDFRY. The chain crosses the membrane as a helical span at residues 376–398; it reads FIIFNTTASLISVIIPLAGNAFM. Over 399–416 the chain is Extracellular; the sequence is AGTGSLACWIRKTWYVNS. A helical transmembrane segment spans residues 417 to 437; it reads VFWIPCGIALTIGSVCIILVI. Residues 438 to 460 lie on the Cytoplasmic side of the membrane; that stretch reads YEIYKITKNVSTKDNRMILLQIK. Residues 461-481 form a helical membrane-spanning segment; the sequence is PFLCVTLVGGSFYYLFIFNFD. The N-linked (GlcNAc...) asparagine glycan is linked to Asn-482. Over 482–514 the chain is Extracellular; it reads NESHSKEYKEKVVDYVMCLLSDTGKECLMAGPN. Residues 515 to 535 form a helical membrane-spanning segment; the sequence is YVAYFVFYFFIRLFGITFFCI. Residues 536–642 lie on the Cytoplasmic side of the membrane; it reads YGTSQNARDI…INSASNTSSD (107 aa). A disordered region spans residues 578-642; that stretch reads GTNPTSNSKN…INSASNTSSD (65 aa). Over residues 583-598 the composition is skewed to low complexity; it reads SNSKNSKNNQNNQNNN. A coiled-coil region spans residues 584-611; that stretch reads NSKNSKNNQNNQNNNSRKEFESKNIELE. The segment covering 599–609 has biased composition (basic and acidic residues); that stretch reads SRKEFESKNIE. Polar residues-rich tracts occupy residues 614-623 and 632-642; these read ESISKGQTTR and NINSASNTSSD.

This sequence belongs to the G-protein coupled receptor Fz/Smo family.

It is found in the membrane. The sequence is that of Frizzled and smoothened-like protein B (fslB) from Dictyostelium discoideum (Social amoeba).